The primary structure comprises 553 residues: Dihydrolipoyllysine-residue acetyltransferase component of pyruvate dehydrogenase complex (553 aa).

Positions Ala-2 to Gly-77 constitute a Lipoyl-binding 1 domain. An N6-lipoyllysine modification is found at Lys-43. The segment at Asp-81 to Leu-125 is disordered. Low complexity predominate over residues Glu-84–Ser-100. The segment covering Lys-101–Gln-110 has biased composition (pro residues). A Lipoyl-binding 2 domain is found at Ala-121–Gly-196. Lys-162 carries the N6-lipoyllysine modification. 2 disordered regions span residues Ala-204–Ala-238 and Ala-278–Ala-321. Positions Ala-206–Ala-232 are enriched in pro residues. In terms of domain architecture, Peripheral subunit-binding (PSBD) spans Tyr-243–Ala-280. Over residues Ala-288–Ala-300 the composition is skewed to low complexity. Catalysis depends on residues His-523 and Asp-527.

The protein belongs to the 2-oxoacid dehydrogenase family. In terms of assembly, forms a 24-polypeptide structural core with octahedral symmetry. Part of the PDH complex, consisting of multiple copies of AceE (E1), DlaT (E2) and Lpd (E3). Requires (R)-lipoate as cofactor.

The catalysed reaction is N(6)-[(R)-dihydrolipoyl]-L-lysyl-[protein] + acetyl-CoA = N(6)-[(R)-S(8)-acetyldihydrolipoyl]-L-lysyl-[protein] + CoA. Its function is as follows. Component of the pyruvate dehydrogenase (PDH) complex, that catalyzes the overall conversion of pyruvate to acetyl-CoA and CO(2). The polypeptide is Dihydrolipoyllysine-residue acetyltransferase component of pyruvate dehydrogenase complex (dlaT) (Mycobacterium bovis (strain ATCC BAA-935 / AF2122/97)).